Reading from the N-terminus, the 153-residue chain is Large ribosomal subunit protein uL30 (153 aa).

It belongs to the universal ribosomal protein uL30 family. In terms of assembly, part of the 50S ribosomal subunit.

The protein is Large ribosomal subunit protein uL30 of Methanocella arvoryzae (strain DSM 22066 / NBRC 105507 / MRE50).